The primary structure comprises 199 residues: Nucleoid occlusion factor SlmA (199 aa).

Residues 11–71 (ERRQQVLTVL…ALIDNLEAHL (61 aa)) form the HTH tetR-type domain. A DNA-binding region (H-T-H motif) is located at residues 34-53 (TTARIAAEVGVSEAALYRYY).

The protein belongs to the nucleoid occlusion factor SlmA family. As to quaternary structure, homodimer. Interacts with FtsZ.

It is found in the cytoplasm. The protein resides in the nucleoid. Functionally, required for nucleoid occlusion (NO) phenomenon, which prevents Z-ring formation and cell division over the nucleoid. Acts as a DNA-associated cell division inhibitor that binds simultaneously chromosomal DNA and FtsZ, and disrupts the assembly of FtsZ polymers. SlmA-DNA-binding sequences (SBS) are dispersed on non-Ter regions of the chromosome, preventing FtsZ polymerization at these regions. In Pasteurella multocida (strain Pm70), this protein is Nucleoid occlusion factor SlmA.